Consider the following 871-residue polypeptide: DNA mismatch repair protein MutS (871 aa).

Position 617–624 (617–624) interacts with ATP; sequence GPNMGGKS.

The protein belongs to the DNA mismatch repair MutS family.

In terms of biological role, this protein is involved in the repair of mismatches in DNA. It is possible that it carries out the mismatch recognition step. This protein has a weak ATPase activity. The protein is DNA mismatch repair protein MutS of Hydrogenovibrio crunogenus (strain DSM 25203 / XCL-2) (Thiomicrospira crunogena).